The primary structure comprises 568 residues: Sulfite reductase [NADPH] hemoprotein beta-component (568 aa).

4 residues coordinate [4Fe-4S] cluster: cysteine 426, cysteine 432, cysteine 471, and cysteine 475. Siroheme is bound at residue cysteine 475.

This sequence belongs to the nitrite and sulfite reductase 4Fe-4S domain family. In terms of assembly, alpha(8)-beta(8). The alpha component is a flavoprotein, the beta component is a hemoprotein. It depends on siroheme as a cofactor. [4Fe-4S] cluster serves as cofactor.

It carries out the reaction hydrogen sulfide + 3 NADP(+) + 3 H2O = sulfite + 3 NADPH + 4 H(+). It functions in the pathway sulfur metabolism; hydrogen sulfide biosynthesis; hydrogen sulfide from sulfite (NADPH route): step 1/1. Component of the sulfite reductase complex that catalyzes the 6-electron reduction of sulfite to sulfide. This is one of several activities required for the biosynthesis of L-cysteine from sulfate. This chain is Sulfite reductase [NADPH] hemoprotein beta-component, found in Xylella fastidiosa (strain M23).